Consider the following 468-residue polypeptide: Zinc finger protein mex-5 (468 aa).

Positions 1 to 19 (MKAASNSVSSAGGSVSPTT) are enriched in low complexity. A disordered region spans residues 1–32 (MKAASNSVSSAGGSVSPTTTQPPLPPGQSSHP). Thr-186 carries the phosphothreonine; by mbk-2 modification. Residues 243–254 (NHFHEHRGEKFG) show a composition bias toward basic and acidic residues. Positions 243–269 (NHFHEHRGEKFGRRGFPIPETDSQQPP) are disordered. C3H1-type zinc fingers lie at residues 270 to 299 (NYKT…HGLK) and 314 to 344 (KYKT…HPTD). The tract at residues 414–468 (DLQAGGDYNQPESNEDDLPPHLRRNRRENPPMNKRRTSLSTKWTSEENLGLRGHY) is disordered. The segment covering 451–460 (SLSTKWTSEE) has biased composition (polar residues). At Ser-458 the chain carries Phosphoserine.

In terms of assembly, interacts (when phosphorylated on Thr-186) with plk-1 (via POLO box domain) and plk-2 (via POLO box domain). Post-translationally, phosphorylation on Ser-458 by par-1 promotes localization of the protein to the anterior cytoplasm of the zygote. Phosphorylation by mbk-1 appears to be required for subsequent phosphorylation by plk-1. As to expression, asymmetrically localized to the anterior of the zygote before mitotic division, then differentially distributed to the somatic blastomere precursor cells.

It localises to the cytoplasm. Its function is as follows. Functions with mex-6 to affect embryonic viability, establish soma germline asymmetry in embryos and establish plk-1, pie-1, mex-1, and pos-1 asymmetry in embryos. Also affects formation of intestinal cells. Binds to mRNA in vitro, and inhibits pgl-3-mediated P-granule formation, probably by competing with pgl-3 for binding to mRNA. Required for neg-1 expression in anterior blastomeres during embryogenesis. The chain is Zinc finger protein mex-5 from Caenorhabditis elegans.